A 162-amino-acid polypeptide reads, in one-letter code: Probable chemoreceptor glutamine deamidase CheD (162 aa).

It belongs to the CheD family.

It carries out the reaction L-glutaminyl-[protein] + H2O = L-glutamyl-[protein] + NH4(+). In terms of biological role, probably deamidates glutamine residues to glutamate on methyl-accepting chemotaxis receptors (MCPs), playing an important role in chemotaxis. This is Probable chemoreceptor glutamine deamidase CheD from Pyrococcus horikoshii (strain ATCC 700860 / DSM 12428 / JCM 9974 / NBRC 100139 / OT-3).